A 465-amino-acid chain; its full sequence is Alpha-2A adrenergic receptor (465 aa).

Residues 1–48 lie on the Extracellular side of the membrane; it reads MFRQEQPLAEGSFAPMGSLQPDAGNASWNGTEAPGGGARATPYSLQVT. N-linked (GlcNAc...) asparagine glycosylation is found at N25 and N29. A helical transmembrane segment spans residues 49 to 74; the sequence is LTLVCLAGLLMLLTVFGNVLVIIAVF. The Cytoplasmic portion of the chain corresponds to 75 to 85; that stretch reads TSRALKAPQNL. Residues 86 to 111 form a helical membrane-spanning segment; the sequence is FLVSLASADILVATLVIPFSLANEVM. At 112-121 the chain is on the extracellular side; it reads GYWYFGKAWC. A disulfide bond links C121 and C203. The chain crosses the membrane as a helical span at residues 122 to 144; it reads EIYLALDVLFCTSSIVHLCAISL. Over 145 to 166 the chain is Cytoplasmic; sequence DRYWSITQAIEYNLKRTPRRIK. The chain crosses the membrane as a helical span at residues 167 to 187; it reads AIIITVWVISAVISFPPLISI. At 188-209 the chain is on the extracellular side; it reads EKKGGGGGPQPAEPRCEINDQK. A helical transmembrane segment spans residues 210–232; sequence WYVISSCIGSFFAPCLIMILVYV. Residues 233–389 lie on the Cytoplasmic side of the membrane; it reads RIYQIAKRRT…RQNREKRFTF (157 aa). Positions 242 to 368 are disordered; that stretch reads TRVPPSRRGP…TPAAGPGEER (127 aa). The segment covering 313–330 has biased composition (basic and acidic residues); sequence SSDHAERPPGPRRPERGP. The residue at position 346 (S346) is a Phosphoserine. Omega-N-methylarginine is present on R368. Residues 390–410 form a helical membrane-spanning segment; sequence VLAVVIGVFVVCWFPFFFTYT. The Extracellular portion of the chain corresponds to 411–424; the sequence is LTAVGCSVPRTLFK. Residues 425–444 form a helical membrane-spanning segment; that stretch reads FFFWFGYCNSSLNPVIYTIF. Residues 445-465 are Cytoplasmic-facing; that stretch reads NHDFRRAFKKILCRGDRKRIV. C457 is lipidated: S-palmitoyl cysteine.

Belongs to the G-protein coupled receptor 1 family. Adrenergic receptor subfamily. ADRA2A sub-subfamily.

The protein localises to the cell membrane. In terms of biological role, alpha-2 adrenergic receptors mediate the catecholamine-induced inhibition of adenylate cyclase through the action of G proteins. The rank order of potency for agonists of this receptor is oxymetazoline &gt; clonidine &gt; epinephrine &gt; norepinephrine &gt; phenylephrine &gt; dopamine &gt; p-synephrine &gt; p-tyramine &gt; serotonin = p-octopamine. For antagonists, the rank order is yohimbine &gt; phentolamine = mianserine &gt; chlorpromazine = spiperone = prazosin &gt; propanolol &gt; alprenolol = pindolol. In Homo sapiens (Human), this protein is Alpha-2A adrenergic receptor.